We begin with the raw amino-acid sequence, 314 residues long: Taste receptor type 2 member 42 (314 aa).

The Extracellular segment spans residues 1-7 (MATELDK). A helical membrane pass occupies residues 8-28 (IFLILEIAEFIIGMLGNVFIG). At 29–50 (LVNCSEGIKNQKVFSADFILTC) the chain is on the cytoplasmic side. The chain crosses the membrane as a helical span at residues 51–71 (LAISTIGQLFVILFDSFLVGL). Over 72–101 (ASHLYTTYRLGKPVIMLWHMTNHLTTWLAT) the chain is Extracellular. Residues 102–122 (CLSIFYFFKIAHFPHSLFLWL) form a helical membrane-spanning segment. At 123-127 (RWRMN) the chain is on the cytoplasmic side. Residues 128–148 (GMIVMLLILSLFLLIFNSLVL) traverse the membrane as a helical segment. The Extracellular segment spans residues 149–187 (EIFIDISLNIIDKSNLTLYLDESKTVYDKLSILKTLLSL). Asparagine 163 is a glycosylation site (N-linked (GlcNAc...) asparagine). Residues 188 to 208 (TSFIPFSLSLTSLLFLFLSLV) form a helical membrane-spanning segment. At 209-238 (RHTRNLKLSSLGSRDSSTEAHRRAMKMVMS) the chain is on the cytoplasmic side. A helical transmembrane segment spans residues 239–259 (FLFLFIVHFFSLQVANWIFFM). Residues 260–265 (LWNNKY) lie on the Extracellular side of the membrane. A helical transmembrane segment spans residues 266–286 (IKFAMLALNAFPSCHSFILIL). The Cytoplasmic portion of the chain corresponds to 287-314 (GNSKLRQTAVRLLWHLRNYTKTPNPLPL).

The protein belongs to the G-protein coupled receptor T2R family.

It localises to the membrane. In terms of biological role, receptor that may play a role in the perception of bitterness and is gustducin-linked. May play a role in sensing the chemical composition of the gastrointestinal content. The activity of this receptor may stimulate alpha gustducin, mediate PLC-beta-2 activation and lead to the gating of TRPM5. This is Taste receptor type 2 member 42 (TAS2R42) from Pan troglodytes (Chimpanzee).